A 303-amino-acid polypeptide reads, in one-letter code: Quinolinate synthase (303 aa).

Residues His-24 and Ser-41 each coordinate iminosuccinate. Cys-86 is a binding site for [4Fe-4S] cluster. Iminosuccinate is bound by residues Tyr-112–Asn-114 and Ser-129. A [4Fe-4S] cluster-binding site is contributed by Cys-172. Iminosuccinate-binding positions include His-198–Glu-200 and Thr-215. Cys-260 contacts [4Fe-4S] cluster.

This sequence belongs to the quinolinate synthase family. Type 2 subfamily. It depends on [4Fe-4S] cluster as a cofactor.

It is found in the cytoplasm. The catalysed reaction is iminosuccinate + dihydroxyacetone phosphate = quinolinate + phosphate + 2 H2O + H(+). The protein operates within cofactor biosynthesis; NAD(+) biosynthesis; quinolinate from iminoaspartate: step 1/1. Functionally, catalyzes the condensation of iminoaspartate with dihydroxyacetone phosphate to form quinolinate. The polypeptide is Quinolinate synthase (Caldicellulosiruptor saccharolyticus (strain ATCC 43494 / DSM 8903 / Tp8T 6331)).